Here is a 430-residue protein sequence, read N- to C-terminus: MSTIIDVYAREVLDSRGNPTVEVEVYTEGGAFGRALVPSGASTGEYEAVELRDGDKSRYLGKGVLNAVKNVNEIIAPEIVGFDVTDQAGIDRAMIELDGTPNKGKLGANAILGVSMAVAHAAADFVGLPLYRYLGGFNAKQLPTPMMNIINGGSHADNNVDFQEFMILPVGAPTFKESIRMGAEVFHALKAVLHDKGLNTAVGDEGGFAPNLGSNREALEVIIEAIEKAGYKAGEDVFLGMDVASSEFYNKETGKYDLSGEGRSMTSAEMVDFYEELCKDFPIISIEDGLDENDWDGHKLLTERLGKKVQLVGDDLFVTNTKKLAEGIEKGISNSILIKVNQIGTLTETFEAIEMAKRAGYTAVVSHRSGETEDATIADIAVATNAGQIKTGSMSRTDRIAKYNQLLRIEDELGEIAVYDGLKSFYNLKK.

(2R)-2-phosphoglycerate is bound at residue Q163. E205 serves as the catalytic Proton donor. Mg(2+) contacts are provided by D242, E287, and D314. Residues K339, R368, S369, and K390 each coordinate (2R)-2-phosphoglycerate. Residue K339 is the Proton acceptor of the active site.

This sequence belongs to the enolase family. Requires Mg(2+) as cofactor.

The protein localises to the cytoplasm. It localises to the secreted. The protein resides in the cell surface. The enzyme catalyses (2R)-2-phosphoglycerate = phosphoenolpyruvate + H2O. It participates in carbohydrate degradation; glycolysis; pyruvate from D-glyceraldehyde 3-phosphate: step 4/5. Functionally, catalyzes the reversible conversion of 2-phosphoglycerate (2-PG) into phosphoenolpyruvate (PEP). It is essential for the degradation of carbohydrates via glycolysis. The sequence is that of Enolase from Bacillus cytotoxicus (strain DSM 22905 / CIP 110041 / 391-98 / NVH 391-98).